Reading from the N-terminus, the 374-residue chain is Queuine tRNA-ribosyltransferase (374 aa).

Residue Asp89 is the Proton acceptor of the active site. Residues Asp89–Phe93, Asp143, Gln185, and Gly212 contribute to the substrate site. Residues Gly243–Asp249 are RNA binding. Residue Asp262 is the Nucleophile of the active site. The RNA binding; important for wobble base 34 recognition stretch occupies residues Thr267–Arg271. Residues Cys300, Cys302, Cys305, and His331 each contribute to the Zn(2+) site.

The protein belongs to the queuine tRNA-ribosyltransferase family. In terms of assembly, homodimer. Within each dimer, one monomer is responsible for RNA recognition and catalysis, while the other monomer binds to the replacement base PreQ1. The cofactor is Zn(2+).

The catalysed reaction is 7-aminomethyl-7-carbaguanine + guanosine(34) in tRNA = 7-aminomethyl-7-carbaguanosine(34) in tRNA + guanine. It participates in tRNA modification; tRNA-queuosine biosynthesis. Catalyzes the base-exchange of a guanine (G) residue with the queuine precursor 7-aminomethyl-7-deazaguanine (PreQ1) at position 34 (anticodon wobble position) in tRNAs with GU(N) anticodons (tRNA-Asp, -Asn, -His and -Tyr). Catalysis occurs through a double-displacement mechanism. The nucleophile active site attacks the C1' of nucleotide 34 to detach the guanine base from the RNA, forming a covalent enzyme-RNA intermediate. The proton acceptor active site deprotonates the incoming PreQ1, allowing a nucleophilic attack on the C1' of the ribose to form the product. After dissociation, two additional enzymatic reactions on the tRNA convert PreQ1 to queuine (Q), resulting in the hypermodified nucleoside queuosine (7-(((4,5-cis-dihydroxy-2-cyclopenten-1-yl)amino)methyl)-7-deazaguanosine). The chain is Queuine tRNA-ribosyltransferase from Saccharophagus degradans (strain 2-40 / ATCC 43961 / DSM 17024).